We begin with the raw amino-acid sequence, 364 residues long: Methylthioribose-1-phosphate isomerase (364 aa).

Residue aspartate 254 is the Proton donor of the active site.

It belongs to the eIF-2B alpha/beta/delta subunits family. MtnA subfamily.

It is found in the cytoplasm. The protein localises to the nucleus. It carries out the reaction 5-(methylsulfanyl)-alpha-D-ribose 1-phosphate = 5-(methylsulfanyl)-D-ribulose 1-phosphate. It functions in the pathway amino-acid biosynthesis; L-methionine biosynthesis via salvage pathway; L-methionine from S-methyl-5-thio-alpha-D-ribose 1-phosphate: step 1/6. In terms of biological role, catalyzes the interconversion of methylthioribose-1-phosphate (MTR-1-P) into methylthioribulose-1-phosphate (MTRu-1-P). The sequence is that of Methylthioribose-1-phosphate isomerase from Drosophila ananassae (Fruit fly).